Reading from the N-terminus, the 481-residue chain is Transcription factor TGA9 (481 aa).

The disordered stretch occupies residues 91-181; it reads QTLPTESSKS…GKQLDAKTLR (91 aa). Positions 97–109 are enriched in low complexity; it reads SSKSGGESSDSGS. The span at 110–126 shows a compositional bias: polar residues; sequence ANFSGKAESQQPESPMS. Residues 143-155 are compositionally biased toward low complexity; that stretch reads SSSTSGLPSTSRT. A Nuclear localization signal motif is present at residues 165–172; it reads KRKATTSG. The region spanning 176 to 220 is the bZIP domain; the sequence is DAKTLRRLAQNREAARKSRLRKKAYVQQLESSRIKLSQLEQELQR. The segment at 178 to 198 is basic motif; that stretch reads KTLRRLAQNREAARKSRLRKK. Residues 204-218 are leucine-zipper; that stretch reads LESSRIKLSQLEQEL. The DOG1 domain occupies 242–450; the sequence is AAIFDMEYGR…RALSSLWLSR (209 aa).

The protein belongs to the bZIP family. In terms of assembly, homodimer. Binds DNA as a dimer. Interacts with floral glutaredoxins GRXC7/ROXY1 and GRXC8/ROXY2 in the nucleus. Interacts with TGA1, TGA2, TGA3, TGA4, TGA5, TGA6, TGA7, TGA10 and PAN. In terms of tissue distribution, mostly expressed in stems, inflorescence apex and flowers, and, to a lower extent, in seedlings, leaves and siliques.

Its subcellular location is the nucleus. In terms of biological role, together with TGA10, basic leucine-zipper transcription factor required for anther development, probably via the activation of SPL expression in anthers and via the regulation of genes with functions in early and middle tapetal development. Required for signaling responses to pathogen-associated molecular patterns (PAMPs) such as flg22 that involves chloroplastic reactive oxygen species (ROS) production and subsequent expression of H(2)O(2)-responsive genes. This is Transcription factor TGA9 from Arabidopsis thaliana (Mouse-ear cress).